An 816-amino-acid chain; its full sequence is Auxin response factor 12 (816 aa).

Positions 1–10 (MSSSSAASIG) are enriched in low complexity. Residues 1 to 24 (MSSSSAASIGPPQPPPPPAPPEEE) are disordered. Pro residues predominate over residues 11-20 (PPQPPPPPAP). The segment at residues 135-237 (FCKTLTASDT…QLLLGIRRAS (103 aa)) is a DNA-binding region (TF-B3). The interval 526–565 (NDQKQKIQPDQSYQVPTSAVLPSPTSLPSHLREKFGFSDP) is disordered. One can recognise a PB1 domain in the interval 717-801 (RTFVKVYKSG…WYIKILSPED (85 aa)).

The protein belongs to the ARF family. In terms of assembly, homodimers and heterodimers.

Its subcellular location is the nucleus. Auxin response factors (ARFs) are transcriptional factors that bind specifically to the DNA sequence 5'-TGTCTC-3' found in the auxin-responsive promoter elements (AuxREs). In Oryza sativa subsp. indica (Rice), this protein is Auxin response factor 12 (ARF12).